Consider the following 79-residue polypeptide: uncharacterized protein (79 aa).

The first 24 residues, 1–24, serve as a signal peptide directing secretion; it reads MKMNPCTVILCKSLFFFCLFQVDC. A glycan (N-linked (GlcNAc...) asparagine) is linked at N33.

It is found in the secreted. This is an uncharacterized protein from Saccharomyces cerevisiae (strain ATCC 204508 / S288c) (Baker's yeast).